A 283-amino-acid polypeptide reads, in one-letter code: Pantothenate synthetase (283 aa).

An ATP-binding site is contributed by 30–37 (MGNLHAGH). The active-site Proton donor is histidine 37. Glutamine 61 contributes to the (R)-pantoate binding site. Glutamine 61 contributes to the beta-alanine binding site. An ATP-binding site is contributed by 149 to 152 (GRKD). Position 155 (glutamine 155) interacts with (R)-pantoate. 186-189 (LSSR) provides a ligand contact to ATP.

It belongs to the pantothenate synthetase family. Homodimer.

The protein resides in the cytoplasm. It carries out the reaction (R)-pantoate + beta-alanine + ATP = (R)-pantothenate + AMP + diphosphate + H(+). The protein operates within cofactor biosynthesis; (R)-pantothenate biosynthesis; (R)-pantothenate from (R)-pantoate and beta-alanine: step 1/1. Its function is as follows. Catalyzes the condensation of pantoate with beta-alanine in an ATP-dependent reaction via a pantoyl-adenylate intermediate. The protein is Pantothenate synthetase of Chromohalobacter salexigens (strain ATCC BAA-138 / DSM 3043 / CIP 106854 / NCIMB 13768 / 1H11).